The primary structure comprises 122 residues: Large ribosomal subunit protein uL14 (122 aa).

The protein belongs to the universal ribosomal protein uL14 family. Part of the 50S ribosomal subunit. Forms a cluster with proteins L3 and L19. In the 70S ribosome, L14 and L19 interact and together make contacts with the 16S rRNA in bridges B5 and B8.

In terms of biological role, binds to 23S rRNA. Forms part of two intersubunit bridges in the 70S ribosome. This Rippkaea orientalis (strain PCC 8801 / RF-1) (Cyanothece sp. (strain PCC 8801)) protein is Large ribosomal subunit protein uL14.